The sequence spans 150 residues: MKVVVQRVKEASVTNDTLNNQIKKGYCLLVGIGQDSTEQDADVIAKKIANARLFEDDNNKLNFNIQQMNGEILSVSQFTLYADVKKGNRPGFSNSKNPDQAVKIYEYFNDALRAYGLTVKTGEFGTHMNVNINNDGPVTIIYESQDGKIQ.

The Gly-cisPro motif, important for rejection of L-amino acids motif lies at 136 to 137 (GP).

It belongs to the DTD family. Homodimer.

It is found in the cytoplasm. It catalyses the reaction glycyl-tRNA(Ala) + H2O = tRNA(Ala) + glycine + H(+). The catalysed reaction is a D-aminoacyl-tRNA + H2O = a tRNA + a D-alpha-amino acid + H(+). An aminoacyl-tRNA editing enzyme that deacylates mischarged D-aminoacyl-tRNAs. Also deacylates mischarged glycyl-tRNA(Ala), protecting cells against glycine mischarging by AlaRS. Acts via tRNA-based rather than protein-based catalysis; rejects L-amino acids rather than detecting D-amino acids in the active site. By recycling D-aminoacyl-tRNA to D-amino acids and free tRNA molecules, this enzyme counteracts the toxicity associated with the formation of D-aminoacyl-tRNA entities in vivo and helps enforce protein L-homochirality. The polypeptide is D-aminoacyl-tRNA deacylase (Staphylococcus aureus (strain MRSA252)).